A 101-amino-acid chain; its full sequence is UPF0235 protein Cphamn1_2066 (101 aa).

This sequence belongs to the UPF0235 family.

In Chlorobium phaeobacteroides (strain BS1), this protein is UPF0235 protein Cphamn1_2066.